The following is a 78-amino-acid chain: UPF0369 protein RF_1112 (78 aa).

Belongs to the SDHAF4 family.

The chain is UPF0369 protein RF_1112 from Rickettsia felis (strain ATCC VR-1525 / URRWXCal2) (Rickettsia azadi).